We begin with the raw amino-acid sequence, 465 residues long: MKHIVKHIHFVGIGGAGMSGIAEVLANLGYAVSGSDLSRNAVTDRLEALGARIAIGHDAANIEGANAVVVSTAVRSDNPEVLAARAKRVPIVQRAVMLAELMRLKQGIAIAGTHGKTTTTSLVASVLAAGGLDPTFVIGGRLISAGANARLGTGDFIVAEADESDASFLNLYPVIEVITNIDADHMDTYGHDFARLKQAFIEFTQRLPFYGSAVVCVDDPNVRQIIPFISKPVVRYGLSPDAQVRAEDIDARDGRMHFTVIREGRAPLAVVLNMPGLHNVQNALAAIAIATDLGVSDDAIQLALAEFNGVGRRFQRYGEVPSADGGQYTLIDDYGHHPVEMAATIAAARGAFPGRRLVLAFQPHRYTRTRDCFDDFVNVLSTVDALVLTEVYAAGEAAIPTASGDALSRALRAAGKVDPVFVATVDDVPDALAKVARNGDVVITMGAGSIGGVPAKLVQHIQQKA.

Residue 112 to 118 (GTHGKTT) participates in ATP binding.

This sequence belongs to the MurCDEF family.

Its subcellular location is the cytoplasm. The catalysed reaction is UDP-N-acetyl-alpha-D-muramate + L-alanine + ATP = UDP-N-acetyl-alpha-D-muramoyl-L-alanine + ADP + phosphate + H(+). Its pathway is cell wall biogenesis; peptidoglycan biosynthesis. Its function is as follows. Cell wall formation. The chain is UDP-N-acetylmuramate--L-alanine ligase from Burkholderia cenocepacia (strain ATCC BAA-245 / DSM 16553 / LMG 16656 / NCTC 13227 / J2315 / CF5610) (Burkholderia cepacia (strain J2315)).